The following is a 984-amino-acid chain: Ephrin type-B receptor 1 (984 aa).

The N-terminal stretch at M1 to A17 is a signal peptide. Residues M18 to P540 are Extracellular-facing. The Eph LBD domain occupies E19–Q201. Fibronectin type-III domains lie at V322 to A432 and A433 to D528. 3 N-linked (GlcNAc...) asparagine glycosylation sites follow: N334, N426, and N480. Residues L541–C563 form a helical membrane-spanning segment. The Cytoplasmic portion of the chain corresponds to S564–A984. Y600 is modified (phosphotyrosine). One can recognise a Protein kinase domain in the interval V619–I882. ATP is bound by residues I625 to V633 and K651. D744 acts as the Proton acceptor in catalysis. The region spanning T911 to Q975 is the SAM domain. At Y928 the chain carries Phosphotyrosine; by autocatalysis. Positions V982–A984 match the PDZ-binding motif.

The protein belongs to the protein kinase superfamily. Tyr protein kinase family. Ephrin receptor subfamily. As to quaternary structure, heterotetramer upon binding of the ligand. The heterotetramer is composed of an ephrin dimer and a receptor dimer. Oligomerization is probably required to induce biological responses. Interacts with EPHB6; transphosphorylates EPHB6 to form an active signaling complex. Interacts with PICK1. Interacts (through Tyr-594) with NCK1 (via SH2 domain); activates the JUN cascade to regulate cell adhesion. The ligand-activated form interacts (through Tyr-928) with GRB7 and GRB10 (via SH2 domains). The ligand-activated form interacts (residues within the catalytic domain) with GRB2 (via SH2 domain). Interacts with GRB2, SHC1 and SRC; activates the MAPK/ERK cascade to regulate cell migration. Interacts with CBL; regulates receptor degradation through ubiquitination. Interacts with ACP1. Post-translationally, phosphorylated. Autophosphorylation is stimulated by the ligand EFNB1. Required for interaction with SH2 domain-containing interactors, for activation of the MAPK/ERK and JUN signaling cascades and for ubiquitination by CBL. In terms of processing, ubiquitinated; (EFNB1)ligand-induced poly- and/or multi-ubiquitination by CBL is regulated by SRC and leads to lysosomal degradation. As to expression, restricted to brain and testes.

The protein localises to the cell membrane. The protein resides in the early endosome membrane. It is found in the cell projection. It localises to the dendrite. It carries out the reaction L-tyrosyl-[protein] + ATP = O-phospho-L-tyrosyl-[protein] + ADP + H(+). Its function is as follows. Receptor tyrosine kinase which binds promiscuously transmembrane ephrin-B family ligands residing on adjacent cells, leading to contact-dependent bidirectional signaling into neighboring cells. The signaling pathway downstream of the receptor is referred to as forward signaling while the signaling pathway downstream of the ephrin ligand is referred to as reverse signaling. Cognate/functional ephrin ligands for this receptor include EFNB1, EFNB2 and EFNB3. During nervous system development, regulates retinal axon guidance redirecting ipsilaterally ventrotemporal retinal ganglion cells axons at the optic chiasm midline. This probably requires repulsive interaction with EFNB2. In the adult nervous system together with EFNB3, regulates chemotaxis, proliferation and polarity of the hippocampus neural progenitors. In addition to its role in axon guidance also plays an important redundant role with other ephrin-B receptors in development and maturation of dendritic spines and synapse formation. May also regulate angiogenesis. More generally, may play a role in targeted cell migration and adhesion. Upon activation by EFNB1 and probably other ephrin-B ligands activates the MAPK/ERK and the JNK signaling cascades to regulate cell migration and adhesion respectively. Involved in the maintenance of the pool of satellite cells (muscle stem cells) by promoting their self-renewal and reducing their activation and differentiation. This is Ephrin type-B receptor 1 (Ephb1) from Rattus norvegicus (Rat).